Reading from the N-terminus, the 165-residue chain is CDP-archaeol synthase (165 aa).

The next 3 helical transmembrane spans lie at isoleucine 4–alanine 24, leucine 78–valine 98, and phenylalanine 118–leucine 138.

This sequence belongs to the CDP-archaeol synthase family. It depends on Mg(2+) as a cofactor.

The protein resides in the cell membrane. It catalyses the reaction 2,3-bis-O-(geranylgeranyl)-sn-glycerol 1-phosphate + CTP + H(+) = CDP-2,3-bis-O-(geranylgeranyl)-sn-glycerol + diphosphate. Its pathway is membrane lipid metabolism; glycerophospholipid metabolism. Its function is as follows. Catalyzes the formation of CDP-2,3-bis-(O-geranylgeranyl)-sn-glycerol (CDP-archaeol) from 2,3-bis-(O-geranylgeranyl)-sn-glycerol 1-phosphate (DGGGP) and CTP. This reaction is the third ether-bond-formation step in the biosynthesis of archaeal membrane lipids. The sequence is that of CDP-archaeol synthase from Pyrobaculum calidifontis (strain DSM 21063 / JCM 11548 / VA1).